Reading from the N-terminus, the 445-residue chain is Branched-chain amino acid permease BraB (445 aa).

12 helical membrane passes run 11 to 31, 45 to 65, 79 to 99, 122 to 142, 158 to 178, 192 to 212, 233 to 253, 275 to 295, 311 to 331, 339 to 359, 375 to 395, and 415 to 435; these read IIIG…IYPP, IGGF…AIAL, PVFG…LFAI, LSLL…ALNP, FTII…GLGA, FLEG…VVVV, AGVI…YLGA, YLFG…ACLT, LIPA…SLII, IIAF…VIIV, IACL…AAGF, and IGWV…TLFI.

This sequence belongs to the branched chain amino acid transporter family.

It is found in the cell membrane. Functionally, branched-chain amino acid transport system which is involved in the uptake of isoleucine, valine and probably leucine. Together with BcaP and BrnQ, plays an important role in the activation of CodY, a branched-chain amino acid-responsive transcriptional regulator that controls the expression of several dozen transcription units in B.subtilis. This is Branched-chain amino acid permease BraB from Bacillus subtilis (strain 168).